The sequence spans 209 residues: Orotate phosphoribosyltransferase (209 aa).

5-phospho-alpha-D-ribose 1-diphosphate contacts are provided by residues Arg96, Lys100, His102, and 122–130 (EDLISTGGS). Ser126 serves as a coordination point for orotate.

Belongs to the purine/pyrimidine phosphoribosyltransferase family. PyrE subfamily. As to quaternary structure, homodimer. It depends on Mg(2+) as a cofactor.

It carries out the reaction orotidine 5'-phosphate + diphosphate = orotate + 5-phospho-alpha-D-ribose 1-diphosphate. Its pathway is pyrimidine metabolism; UMP biosynthesis via de novo pathway; UMP from orotate: step 1/2. Catalyzes the transfer of a ribosyl phosphate group from 5-phosphoribose 1-diphosphate to orotate, leading to the formation of orotidine monophosphate (OMP). This Listeria innocua serovar 6a (strain ATCC BAA-680 / CLIP 11262) protein is Orotate phosphoribosyltransferase.